Here is a 374-residue protein sequence, read N- to C-terminus: UDP-N-acetylglucosamine--N-acetylmuramyl-(pentapeptide) pyrophosphoryl-undecaprenol N-acetylglucosamine transferase (374 aa).

UDP-N-acetyl-alpha-D-glucosamine-binding positions include Thr13–Gly15, Asn124, Arg165, Ser193, and Gln294.

Belongs to the glycosyltransferase 28 family. MurG subfamily.

The protein resides in the cell inner membrane. It catalyses the reaction di-trans,octa-cis-undecaprenyl diphospho-N-acetyl-alpha-D-muramoyl-L-alanyl-D-glutamyl-meso-2,6-diaminopimeloyl-D-alanyl-D-alanine + UDP-N-acetyl-alpha-D-glucosamine = di-trans,octa-cis-undecaprenyl diphospho-[N-acetyl-alpha-D-glucosaminyl-(1-&gt;4)]-N-acetyl-alpha-D-muramoyl-L-alanyl-D-glutamyl-meso-2,6-diaminopimeloyl-D-alanyl-D-alanine + UDP + H(+). It participates in cell wall biogenesis; peptidoglycan biosynthesis. Its function is as follows. Cell wall formation. Catalyzes the transfer of a GlcNAc subunit on undecaprenyl-pyrophosphoryl-MurNAc-pentapeptide (lipid intermediate I) to form undecaprenyl-pyrophosphoryl-MurNAc-(pentapeptide)GlcNAc (lipid intermediate II). This is UDP-N-acetylglucosamine--N-acetylmuramyl-(pentapeptide) pyrophosphoryl-undecaprenol N-acetylglucosamine transferase from Rhizobium leguminosarum bv. trifolii (strain WSM2304).